A 686-amino-acid chain; its full sequence is Mannan-binding lectin serine protease 2 (686 aa).

Residues 1–15 form the signal peptide; the sequence is MRLLTLLGLLCGSVA. The 122-residue stretch at 16-137 folds into the CUB 1 domain; the sequence is TPLGPKWPEP…TGFEAFYAAE (122 aa). Ca(2+) contacts are provided by glutamate 67, aspartate 75, aspartate 120, serine 122, asparagine 123, aspartate 138, isoleucine 139, and glutamate 141. An intrachain disulfide couples cysteine 72 to cysteine 90. Residues 138–181 form the EGF-like; calcium-binding domain; the sequence is DIDECQVAPGEAPTCDHHCHNHLGGFYCSCRAGYVLHRNKRTCS. 12 cysteine pairs are disulfide-bonded: cysteine 142–cysteine 156, cysteine 152–cysteine 165, cysteine 167–cysteine 180, cysteine 184–cysteine 211, cysteine 241–cysteine 259, cysteine 300–cysteine 348, cysteine 328–cysteine 361, cysteine 366–cysteine 412, cysteine 396–cysteine 430, cysteine 434–cysteine 552, cysteine 598–cysteine 618, and cysteine 629–cysteine 660. Ca(2+)-binding residues include asparagine 158, histidine 159, and glycine 162. At asparagine 158 the chain carries (3R)-3-hydroxyasparagine. Residues 184 to 296 enclose the CUB 2 domain; the sequence is CSGQVFTQRS…TGWKIHYTST (113 aa). 2 Sushi domains span residues 298-363 and 364-432; these read QPCP…ACSI and VDCG…VCEP. In terms of domain architecture, Peptidase S1 spans 445 to 684; sequence IYGGQKAKPG…YIPWIENIIS (240 aa). Active-site charge relay system residues include histidine 483 and aspartate 532. Serine 633 serves as the catalytic Charge relay system.

Belongs to the peptidase S1 family. As to quaternary structure, homodimer; disulfide-linked. Binds MBL2. Isoform 2 binds to MASP1. Binds SERPING1. Dimerization and MBL2 binding requires calcium ions. Post-translationally, the iron and 2-oxoglutarate dependent 3-hydroxylation of aspartate and asparagine is (R) stereospecific within EGF domains. In terms of processing, activated by cleavage after Arg-444. The uncleaved zymogen is inactive towards synthetic substrates, but has sufficient activity to effect autocatalytic cleavage. As to expression, plasma.

Its subcellular location is the secreted. The enzyme catalyses Selective cleavage after Arg-223 in complement component C2 (-Ser-Leu-Gly-Arg-|-Lys-Ile-Gln-Ile) and after Arg-76 in complement component C4 (-Gly-Leu-Gln-Arg-|-Ala-Leu-Glu-Ile).. In terms of biological role, serum protease that plays an important role in the activation of the complement system via mannose-binding lectin. After activation by auto-catalytic cleavage it cleaves C2 and C4, leading to their activation and to the formation of C3 convertase. This is Mannan-binding lectin serine protease 2 (MASP2) from Homo sapiens (Human).